The chain runs to 136 residues: Small ribosomal subunit protein eS17A (136 aa).

This sequence belongs to the eukaryotic ribosomal protein eS17 family. As to quaternary structure, component of the small ribosomal subunit (SSU). Mature yeast ribosomes consist of a small (40S) and a large (60S) subunit. The 40S small subunit contains 1 molecule of ribosomal RNA (18S rRNA) and 33 different proteins (encoded by 57 genes). The large 60S subunit contains 3 rRNA molecules (25S, 5.8S and 5S rRNA) and 46 different proteins (encoded by 81 genes).

It localises to the cytoplasm. In terms of biological role, component of the ribosome, a large ribonucleoprotein complex responsible for the synthesis of proteins in the cell. The small ribosomal subunit (SSU) binds messenger RNAs (mRNAs) and translates the encoded message by selecting cognate aminoacyl-transfer RNA (tRNA) molecules. The large subunit (LSU) contains the ribosomal catalytic site termed the peptidyl transferase center (PTC), which catalyzes the formation of peptide bonds, thereby polymerizing the amino acids delivered by tRNAs into a polypeptide chain. The nascent polypeptides leave the ribosome through a tunnel in the LSU and interact with protein factors that function in enzymatic processing, targeting, and the membrane insertion of nascent chains at the exit of the ribosomal tunnel. In Saccharomyces cerevisiae (strain ATCC 204508 / S288c) (Baker's yeast), this protein is Small ribosomal subunit protein eS17A.